The chain runs to 30 residues: Nattererin-1 (30 aa).

Expressed by the skin glands.

Its subcellular location is the secreted. Functionally, probably has antibacterial activity. The polypeptide is Nattererin-1 (Physalaemus nattereri (Cuyaba dwarf frog)).